The sequence spans 458 residues: Putative long chain fatty acid-CoA ligase VraA (458 aa).

The protein belongs to the ATP-dependent AMP-binding enzyme family.

The chain is Putative long chain fatty acid-CoA ligase VraA (vraA) from Staphylococcus aureus (strain MRSA252).